The chain runs to 154 residues: Ascorbate-specific PTS system EIIA component (154 aa).

Residues Ser-6–Thr-150 form the PTS EIIA type-2 domain. The Tele-phosphohistidine intermediate role is filled by His-68. Position 68 is a phosphohistidine (His-68).

The protein localises to the cytoplasm. In terms of biological role, the phosphoenolpyruvate-dependent sugar phosphotransferase system (sugar PTS), a major carbohydrate active transport system, catalyzes the phosphorylation of incoming sugar substrates concomitantly with their translocation across the cell membrane. The enzyme II UlaABC PTS system is involved in ascorbate transport. The chain is Ascorbate-specific PTS system EIIA component (ulaC) from Salmonella typhi.